Consider the following 98-residue polypeptide: NADH-ubiquinone oxidoreductase chain 4L (98 aa).

Transmembrane regions (helical) follow at residues 1-21 (MSLVHINILMAFTMSLTGLLM), 29-49 (ALLCLEGMVLSLFILATLTIL), and 61-81 (IILLVFAACEAAIGLALLIMI).

Belongs to the complex I subunit 4L family. In terms of assembly, core subunit of respiratory chain NADH dehydrogenase (Complex I) which is composed of 45 different subunits.

It localises to the mitochondrion inner membrane. It catalyses the reaction a ubiquinone + NADH + 5 H(+)(in) = a ubiquinol + NAD(+) + 4 H(+)(out). In terms of biological role, core subunit of the mitochondrial membrane respiratory chain NADH dehydrogenase (Complex I) which catalyzes electron transfer from NADH through the respiratory chain, using ubiquinone as an electron acceptor. Part of the enzyme membrane arm which is embedded in the lipid bilayer and involved in proton translocation. The sequence is that of NADH-ubiquinone oxidoreductase chain 4L (MT-ND4L) from Monodon monoceros (Narwhal).